Consider the following 663-residue polypeptide: DNA topoisomerase 1 (663 aa).

The Toprim domain maps to 4–137 (SWLIITEKDN…TVKVDRVRYS (134 aa)). Mg(2+) is bound by residues Glu-10 and Asp-106. Residues 155 to 558 (DFNLANAALA…ESREMLLQIL (404 aa)) enclose the Topo IA-type catalytic domain. The interaction with DNA stretch occupies residues 193-198 (SVGRVQ). Tyr-306 serves as the catalytic O-(5'-phospho-DNA)-tyrosine intermediate. A C4-type 1 zinc finger spans residues 583–610 (CPECGGELVVRQSKAGKRFIGCSNYPDC). The C4-type 2; atypical zinc finger occupies 629 to 653 (CKEHEIKEVKIRTKKGYWNLGCPYC).

Belongs to the type IA topoisomerase family. In terms of assembly, monomer. The cofactor is Mg(2+).

It carries out the reaction ATP-independent breakage of single-stranded DNA, followed by passage and rejoining.. Its function is as follows. Releases the supercoiling and torsional tension of DNA, which is introduced during the DNA replication and transcription, by transiently cleaving and rejoining one strand of the DNA duplex. Introduces a single-strand break via transesterification at a target site in duplex DNA. The scissile phosphodiester is attacked by the catalytic tyrosine of the enzyme, resulting in the formation of a DNA-(5'-phosphotyrosyl)-enzyme intermediate and the expulsion of a 3'-OH DNA strand. The free DNA strand then undergoes passage around the unbroken strand, thus removing DNA supercoils. Finally, in the religation step, the DNA 3'-OH attacks the covalent intermediate to expel the active-site tyrosine and restore the DNA phosphodiester backbone. This Archaeoglobus fulgidus (strain ATCC 49558 / DSM 4304 / JCM 9628 / NBRC 100126 / VC-16) protein is DNA topoisomerase 1.